A 325-amino-acid chain; its full sequence is Pyruvate dehydrogenase E1 component subunit beta (325 aa).

Glutamate 60 contributes to the thiamine diphosphate binding site.

As to quaternary structure, heterodimer of an alpha and a beta chain. The cofactor is thiamine diphosphate.

The enzyme catalyses N(6)-[(R)-lipoyl]-L-lysyl-[protein] + pyruvate + H(+) = N(6)-[(R)-S(8)-acetyldihydrolipoyl]-L-lysyl-[protein] + CO2. In terms of biological role, the pyruvate dehydrogenase complex catalyzes the overall conversion of pyruvate to acetyl-CoA and CO(2). It contains multiple copies of three enzymatic components: pyruvate dehydrogenase (E1), dihydrolipoamide acetyltransferase (E2) and lipoamide dehydrogenase (E3). The protein is Pyruvate dehydrogenase E1 component subunit beta (pdhB) of Staphylococcus aureus (strain Mu50 / ATCC 700699).